The following is a 245-amino-acid chain: Ribosomal RNA small subunit methyltransferase G (245 aa).

S-adenosyl-L-methionine contacts are provided by residues Gly-90, Leu-95, Ala-140–Glu-141, and Arg-158. The segment at Val-223 to Arg-245 is disordered. The segment covering Arg-227–Arg-245 has biased composition (basic residues).

Belongs to the methyltransferase superfamily. RNA methyltransferase RsmG family.

It localises to the cytoplasm. Functionally, specifically methylates the N7 position of guanine in position 518 of 16S rRNA. This Mycobacterium avium (strain 104) protein is Ribosomal RNA small subunit methyltransferase G.